We begin with the raw amino-acid sequence, 237 residues long: Immunoglobulin superfamily member 6 (237 aa).

The signal sequence occupies residues 1–27 (MGPVSARRSRLRPEISLILFQVGMVGA). Over 28 to 152 (CTVYVLQPGY…ERLFSKEVRS (125 aa)) the chain is Extracellular. One can recognise an Ig-like C2-type domain in the interval 30–134 (VYVLQPGYLE…ELSPSAKHVG (105 aa)). Cys-51 and Cys-118 are disulfide-bonded. Residues 153–173 (FLIVLLALLSVYITGVCVTFI) traverse the membrane as a helical segment. Over 174 to 237 (VLFKSKSNGP…RKALPNPGRA (64 aa)) the chain is Cytoplasmic. The span at 215–229 (TSHLPEQEGTDENRK) shows a compositional bias: basic and acidic residues. The interval 215–237 (TSHLPEQEGTDENRKALPNPGRA) is disordered.

As to expression, ubiquitous with higher expression in immune tissue.

It is found in the membrane. This Mus musculus (Mouse) protein is Immunoglobulin superfamily member 6 (Igsf6).